The primary structure comprises 1260 residues: uncharacterized protein (1260 aa).

The protein localises to the plastid. The protein resides in the chloroplast. This is an uncharacterized protein from Ostreococcus tauri.